We begin with the raw amino-acid sequence, 143 residues long: Large ribosomal subunit protein uL11 (143 aa).

The protein belongs to the universal ribosomal protein uL11 family. As to quaternary structure, part of the ribosomal stalk of the 50S ribosomal subunit. Interacts with L10 and the large rRNA to form the base of the stalk. L10 forms an elongated spine to which L12 dimers bind in a sequential fashion forming a multimeric L10(L12)X complex. One or more lysine residues are methylated.

Its function is as follows. Forms part of the ribosomal stalk which helps the ribosome interact with GTP-bound translation factors. The sequence is that of Large ribosomal subunit protein uL11 from Paraburkholderia xenovorans (strain LB400).